A 214-amino-acid chain; its full sequence is Adenylate kinase (214 aa).

ATP is bound at residue 14–19 (GSGKGT). The interval 32-61 (SVGKVLRTVMESNTAEADVVKKFIKSGKLV) is NMP. Residues arginine 38, 59 to 61 (KLV), 87 to 90 (GYPR), and glutamine 94 contribute to the AMP site. The interval 124–162 (GRISCTDCGTIYNKLYCMPKINGVCDICNSSSFQNRVDD) is LID. Position 125 (arginine 125) interacts with ATP. The Zn(2+) site is built by cysteine 128 and cysteine 131. 134–135 (IY) contacts ATP. Residues cysteine 148 and cysteine 151 each coordinate Zn(2+). 2 residues coordinate AMP: arginine 159 and arginine 170. Glutamine 198 contributes to the ATP binding site.

The protein belongs to the adenylate kinase family. In terms of assembly, monomer.

The protein resides in the cytoplasm. The enzyme catalyses AMP + ATP = 2 ADP. The protein operates within purine metabolism; AMP biosynthesis via salvage pathway; AMP from ADP: step 1/1. Catalyzes the reversible transfer of the terminal phosphate group between ATP and AMP. Plays an important role in cellular energy homeostasis and in adenine nucleotide metabolism. The protein is Adenylate kinase of Orientia tsutsugamushi (strain Ikeda) (Rickettsia tsutsugamushi).